A 189-amino-acid chain; its full sequence is Leucine repeat adapter protein 25 (189 aa).

S28 is subject to Phosphoserine. The tract at residues E54–R82 is disordered. A compositionally biased stretch (low complexity) spans A68 to G79. Residues L86–L114 form an LRR repeat. Residues S136 to N175 are disordered. The segment covering A159–T169 has biased composition (pro residues). At S188 the chain carries Phosphoserine.

It belongs to the FAM89 family. In terms of assembly, interacts with SKI. Interacts (via LRR repeat) with CDC42BPA (via AGC-kinase C-terminal domain), CDC42BPB (via AGC-kinase C-terminal domain) and LIMK1 (via LIM zinc-binding domains). Forms a tripartite complex with CDC42BPA, CDC42BPB and LIMK1. (Microbial infection) Interacts with mouse mammary tumor virus (MMTV) envelope glycoprotein gp70. Widely expressed. Expressed in the early postnatal brain.

The protein resides in the cytoplasm. Its subcellular location is the cell projection. It localises to the lamellipodium. The protein localises to the cell surface. Negatively regulates TGF-beta-induced signaling; in cooperation with SKI prevents the translocation of SMAD2 from the nucleus to the cytoplasm in response to TGF-beta. Acts as an adapter that mediates the specific recognition of LIMK1 by CDC42BPA and CDC42BPB in the lamellipodia. LRAP25-mediated CDC42BPA/CDC42BPB targeting to LIMK1 and the lamellipodium results in LIMK1 activation and the subsequent phosphorylation of CFL1 which is important for lamellipodial F-actin regulation. Its function is as follows. (Microbial infection) May be a receptor for mouse mammary tumor virus (MMTV). The sequence is that of Leucine repeat adapter protein 25 from Mus musculus (Mouse).